A 38-amino-acid polypeptide reads, in one-letter code: ATP synthase subunit O, mitochondrial (38 aa).

This sequence belongs to the ATPase delta chain family. In terms of assembly, F-type ATPases have 2 components, CF(1) - the catalytic core - and CF(0) - the membrane proton channel. CF(1) has five subunits: alpha(3), beta(3), gamma(1), delta(1), epsilon(1). CF(0) has three main subunits: a, b and c.

The protein resides in the mitochondrion. It localises to the mitochondrion inner membrane. Its function is as follows. Mitochondrial membrane ATP synthase (F(1)F(0) ATP synthase or Complex V) produces ATP from ADP in the presence of a proton gradient across the membrane which is generated by electron transport complexes of the respiratory chain. F-type ATPases consist of two structural domains, F(1) - containing the extramembraneous catalytic core and F(0) - containing the membrane proton channel, linked together by a central stalk and a peripheral stalk. During catalysis, ATP synthesis in the catalytic domain of F(1) is coupled via a rotary mechanism of the central stalk subunits to proton translocation. Part of the complex F(0) domain and the peripheric stalk, which acts as a stator to hold the catalytic alpha(3)beta(3) subcomplex and subunit a/ATP6 static relative to the rotary elements. The sequence is that of ATP synthase subunit O, mitochondrial from Pisum sativum (Garden pea).